The sequence spans 432 residues: Enolase (432 aa).

Gln-167 contacts (2R)-2-phosphoglycerate. Glu-209 functions as the Proton donor in the catalytic mechanism. Residues Asp-246, Glu-291, and Asp-318 each contribute to the Mg(2+) site. Residues Lys-343, Arg-372, Ser-373, and Lys-394 each contribute to the (2R)-2-phosphoglycerate site. Catalysis depends on Lys-343, which acts as the Proton acceptor.

It belongs to the enolase family. As to quaternary structure, component of the RNA degradosome, a multiprotein complex involved in RNA processing and mRNA degradation. It depends on Mg(2+) as a cofactor.

Its subcellular location is the cytoplasm. It localises to the secreted. The protein localises to the cell surface. It carries out the reaction (2R)-2-phosphoglycerate = phosphoenolpyruvate + H2O. The protein operates within carbohydrate degradation; glycolysis; pyruvate from D-glyceraldehyde 3-phosphate: step 4/5. In terms of biological role, catalyzes the reversible conversion of 2-phosphoglycerate (2-PG) into phosphoenolpyruvate (PEP). It is essential for the degradation of carbohydrates via glycolysis. The sequence is that of Enolase from Aliivibrio fischeri (strain ATCC 700601 / ES114) (Vibrio fischeri).